The chain runs to 338 residues: Glycerol-3-phosphate dehydrogenase [NAD(P)+] (338 aa).

The NADPH site is built by serine 14, tyrosine 15, histidine 35, and lysine 109. Lysine 109, glycine 138, and threonine 140 together coordinate sn-glycerol 3-phosphate. Alanine 142 is an NADPH binding site. Sn-glycerol 3-phosphate is bound by residues lysine 194, aspartate 247, serine 257, arginine 258, and asparagine 259. Lysine 194 acts as the Proton acceptor in catalysis. Arginine 258 lines the NADPH pocket. Residues valine 282 and glutamate 284 each contribute to the NADPH site.

The protein belongs to the NAD-dependent glycerol-3-phosphate dehydrogenase family.

It is found in the cytoplasm. The catalysed reaction is sn-glycerol 3-phosphate + NAD(+) = dihydroxyacetone phosphate + NADH + H(+). It carries out the reaction sn-glycerol 3-phosphate + NADP(+) = dihydroxyacetone phosphate + NADPH + H(+). It participates in membrane lipid metabolism; glycerophospholipid metabolism. In terms of biological role, catalyzes the reduction of the glycolytic intermediate dihydroxyacetone phosphate (DHAP) to sn-glycerol 3-phosphate (G3P), the key precursor for phospholipid synthesis. The protein is Glycerol-3-phosphate dehydrogenase [NAD(P)+] of Sodalis glossinidius (strain morsitans).